The following is a 159-amino-acid chain: U1 small nuclear ribonucleoprotein C (159 aa).

A Matrin-type zinc finger spans residues 4 to 36 (FYCDYCDTYLTHDSPSVRKTHCSGRKHKENVKD). Tyr-8 carries the post-translational modification Phosphotyrosine. The residue at position 17 (Ser-17) is a Phosphoserine. At Lys-52 the chain carries N6-acetyllysine. Disordered stretches follow at residues 62–96 (IPPTPFSAPPPAGAMIPPPPSLPGPPRPGMMPAPH) and 140–159 (RPPARPMMVPTRPGMTRPDR). The segment covering 63–92 (PPTPFSAPPPAGAMIPPPPSLPGPPRPGMM) has biased composition (pro residues).

This sequence belongs to the U1 small nuclear ribonucleoprotein C family. Component of the U1 snRNP. The U1 snRNP is composed of the U1 snRNA and the 7 core Sm proteins SNRPB, SNRPD1, SNRPD2, SNRPD3, SNRPE, SNRPF and SNRPG that assemble in a heptameric protein ring on the Sm site of the small nuclear RNA to form the core snRNP, and at least 3 U1 snRNP-specific proteins SNRNP70/U1-70K, SNRPA/U1-A and SNRPC/U1-C. SNRPC/U1-C interacts with U1 snRNA and the 5' splice-site region of the pre-mRNA. Interacts (via N-terminus) with TIA1 (via C-terminus); thereby promoting spliceosomal U1 snRNP recruitment to 5' splice sites.

It localises to the nucleus. In terms of biological role, component of the spliceosomal U1 snRNP, which is essential for recognition of the pre-mRNA 5' splice-site and the subsequent assembly of the spliceosome. SNRPC/U1-C is directly involved in initial 5' splice-site recognition for both constitutive and regulated alternative splicing. The interaction with the 5' splice-site seems to precede base-pairing between the pre-mRNA and the U1 snRNA. Stimulates commitment or early (E) complex formation by stabilizing the base pairing of the 5' end of the U1 snRNA and the 5' splice-site region. The chain is U1 small nuclear ribonucleoprotein C from Homo sapiens (Human).